The chain runs to 353 residues: Lipase ZK262.3 (353 aa).

Positions 1 to 22 (MPKNLRFSVFLLFLLCINSVFG) are cleaved as a signal peptide. N-linked (GlcNAc...) asparagine glycosylation is found at Asn-32 and Asn-64. The active-site Nucleophile is the Ser-163. Asp-221 acts as the Charge relay system in catalysis. N-linked (GlcNAc...) asparagine glycosylation occurs at Asn-267. Cys-277 and Cys-288 are oxidised to a cystine. His-306 (charge relay system) is an active-site residue.

The protein belongs to the AB hydrolase superfamily. Lipase family.

It localises to the secreted. Functionally, probable lipase. The sequence is that of Lipase ZK262.3 from Caenorhabditis elegans.